The chain runs to 70 residues: DNA gyrase inhibitor YacG (70 aa).

4 residues coordinate Zn(2+): C21, C24, C36, and C40.

The protein belongs to the DNA gyrase inhibitor YacG family. Interacts with GyrB. Zn(2+) serves as cofactor.

Inhibits all the catalytic activities of DNA gyrase by preventing its interaction with DNA. Acts by binding directly to the C-terminal domain of GyrB, which probably disrupts DNA binding by the gyrase. This Sinorhizobium medicae (strain WSM419) (Ensifer medicae) protein is DNA gyrase inhibitor YacG.